We begin with the raw amino-acid sequence, 139 residues long: Actin-depolymerizing factor 1 (139 aa).

Positions 5-139 (ASGMAVHDDC…DLDVFRSRAN (135 aa)) constitute an ADF-H domain. Phosphoserine; by CPK3 is present on Ser-6.

The protein belongs to the actin-binding proteins ADF family. In terms of assembly, interacts with the 14-3-3-like protein GRF6/AFT1. Post-translationally, phosphorylation at Ser-6 by CPK3/CDPK6 inhibits actin-depolimerizing activity. In terms of tissue distribution, expressed in vascular tissues of all organs.

It is found in the cytoplasm. The protein localises to the cytoskeleton. Its function is as follows. Actin-depolymerizing protein. Stimulates F-actin depolymerization. Involved in plant development, cell organ expansion and flowering by controlling breakdown of thick actin cables. Severs actin filaments or bundles and promotes actin cytoskeleton disassembly. Binds monomeric actin (G-actin) with a marked preference for the ADP-loaded form and inhibits the rate of nucleotide exchange on G-actin. The protein is Actin-depolymerizing factor 1 (ADF1) of Arabidopsis thaliana (Mouse-ear cress).